The sequence spans 366 residues: ATPase ASNA1 homolog (366 aa).

Position 33 to 40 (33 to 40 (KGGVGKTT)) interacts with ATP. Aspartate 62 is a catalytic residue. ATP contacts are provided by glutamate 234 and asparagine 261.

This sequence belongs to the arsA ATPase family. In terms of assembly, homodimer.

It localises to the cytoplasm. The protein localises to the endoplasmic reticulum. Its function is as follows. ATPase required for the post-translational delivery of tail-anchored (TA) proteins to the endoplasmic reticulum. Recognizes and selectively binds the transmembrane domain of TA proteins in the cytosol. This complex then targets to the endoplasmic reticulum by membrane-bound receptors, where the tail-anchored protein is released for insertion. This process is regulated by ATP binding and hydrolysis. ATP binding drives the homodimer towards the closed dimer state, facilitating recognition of newly synthesized TA membrane proteins. ATP hydrolysis is required for insertion. Subsequently, the homodimer reverts towards the open dimer state, lowering its affinity for the membrane-bound receptor, and returning it to the cytosol to initiate a new round of targeting. This is ATPase ASNA1 homolog from Cryptosporidium parvum (strain Iowa II).